The following is a 424-amino-acid chain: UPF0597 protein Ssed_2537 (424 aa).

It belongs to the UPF0597 family.

This is UPF0597 protein Ssed_2537 from Shewanella sediminis (strain HAW-EB3).